A 358-amino-acid polypeptide reads, in one-letter code: Type II restriction enzyme SacI (358 aa).

The enzyme catalyses Endonucleolytic cleavage of DNA to give specific double-stranded fragments with terminal 5'-phosphates.. In terms of biological role, a subtype P restriction enzyme that recognizes the double-stranded sequence 5'-GAGCTC-3' and cleaves after T-5. This chain is Type II restriction enzyme SacI, found in Streptomyces achromogenes.